A 130-amino-acid polypeptide reads, in one-letter code: Large ribosomal subunit protein bL17 (130 aa).

The protein belongs to the bacterial ribosomal protein bL17 family. In terms of assembly, part of the 50S ribosomal subunit. Contacts protein L32.

The chain is Large ribosomal subunit protein bL17 from Buchnera aphidicola subsp. Acyrthosiphon pisum (strain APS) (Acyrthosiphon pisum symbiotic bacterium).